A 760-amino-acid polypeptide reads, in one-letter code: Serine/threonine-protein kinase Haspin homolog ALK1 (760 aa).

2 positions are modified to phosphoserine: serine 76 and serine 79. 4 disordered regions span residues 76-100 (SDAS…KKRW), 123-153 (SSFT…SSLD), 187-264 (DDIS…STVS), and 362-408 (KRNS…CSYS). Polar residues predominate over residues 78–95 (ASLNVTTGNNTSRKTTSN). Positions 200–202 (KEN) match the KEN box motif. Residues 209 to 220 (KKNSSIASTSSE) are compositionally biased toward polar residues. The D box motif lies at 224–232 (RTPLKPLVN). A compositionally biased stretch (polar residues) spans 237–250 (PTSQPQQQQPLYNA). The span at 251–264 (SLSSRRSSISSTVS) shows a compositional bias: low complexity. The span at 362-386 (KRNSQSSLKHKSSHASLQKFKRNKG) shows a compositional bias: basic residues. A compositionally biased stretch (low complexity) spans 398-408 (NSSNDDSCSYS). The 293-residue stretch at 468–760 (NCDIKRILNP…NTGDLLKLYK (293 aa)) folds into the Protein kinase domain. Residues 474 to 482 (ILNPAKGDV) and lysine 510 contribute to the ATP site.

The protein belongs to the protein kinase superfamily. Ser/Thr protein kinase family. Haspin subfamily. Periodically phosphorylated during the cell cycle with a phosphorylation peak during mitosis and hyperphosphorylated after DNA damage.

The enzyme catalyses L-seryl-[protein] + ATP = O-phospho-L-seryl-[protein] + ADP + H(+). The catalysed reaction is L-threonyl-[protein] + ATP = O-phospho-L-threonyl-[protein] + ADP + H(+). In terms of biological role, serine/threonine haspin-like protein kinase involved in cell cycle regulation. The polypeptide is Serine/threonine-protein kinase Haspin homolog ALK1 (ALK1) (Saccharomyces cerevisiae (strain ATCC 204508 / S288c) (Baker's yeast)).